A 147-amino-acid polypeptide reads, in one-letter code: Shadow of prion protein (147 aa).

The first 24 residues, 1-24 (MNWTAATCWALLLAAAFLCDSCSA), serve as a signal peptide directing secretion. Positions 26 to 43 (GGRGGARGSARGVRGGAR) are enriched in gly residues. The tract at residues 26–45 (GGRGGARGSARGVRGGARGA) is disordered. The N-linked (GlcNAc...) asparagine glycan is linked to asparagine 107. Glycine 122 is lipidated: GPI-anchor amidated glycine. A propeptide spans 123-147 (SGSVHSPRICLLLGGTLGALELLRP) (removed in mature form).

The protein belongs to the SPRN family. In terms of processing, N-glycosylated. In terms of tissue distribution, mainly expressed in brain (at protein level). In brain, it is highly expressed in the hippocampus and cerebellum and is also expressed at lower level in other areas of the brain including the cerebral cortex, the thalamus and the medulla. In hippocampus and cerebellum it is highly expressed in the cell bodies of pyramidal cells and Purkinje cells, respectively.

It localises to the cell membrane. Functionally, prion-like protein that has PrP(C)-like neuroprotective activity. May act as a modulator for the biological actions of normal and abnormal PrP. The chain is Shadow of prion protein (Sprn) from Mus musculus (Mouse).